The sequence spans 187 residues: Orotate phosphoribosyltransferase (187 aa).

Residues arginine 99, lysine 100, lysine 103, histidine 105, and 125–133 (DDVITTGGS) contribute to the 5-phospho-alpha-D-ribose 1-diphosphate site. Threonine 129 and arginine 157 together coordinate orotate.

This sequence belongs to the purine/pyrimidine phosphoribosyltransferase family. PyrE subfamily. Homodimer. It depends on Mg(2+) as a cofactor.

It carries out the reaction orotidine 5'-phosphate + diphosphate = orotate + 5-phospho-alpha-D-ribose 1-diphosphate. The protein operates within pyrimidine metabolism; UMP biosynthesis via de novo pathway; UMP from orotate: step 1/2. Its function is as follows. Catalyzes the transfer of a ribosyl phosphate group from 5-phosphoribose 1-diphosphate to orotate, leading to the formation of orotidine monophosphate (OMP). This Leptospira borgpetersenii serovar Hardjo-bovis (strain JB197) protein is Orotate phosphoribosyltransferase.